The following is a 319-amino-acid chain: RWD domain-containing protein 2B (319 aa).

Positions 41-165 (AELDLLASMF…EWVREHASGY (125 aa)) constitute an RWD domain. S275 is modified (phosphoserine).

In terms of tissue distribution, ubiquitous.

The sequence is that of RWD domain-containing protein 2B (RWDD2B) from Homo sapiens (Human).